The sequence spans 335 residues: 2-acylglycerol O-acyltransferase 1 (335 aa).

The next 2 helical transmembrane spans lie at 24–44 (WVFS…SLVL) and 47–67 (LWLI…TPQA). N-linked (GlcNAc...) asparagine glycans are attached at residues N77, N125, and N180.

This sequence belongs to the diacylglycerol acyltransferase family.

It is found in the endoplasmic reticulum membrane. It catalyses the reaction a 2-acylglycerol + an acyl-CoA = a 1,2-diacylglycerol + CoA. The enzyme catalyses a 2-acylglycerol + an acyl-CoA = a 1,2-diacyl-sn-glycerol + CoA. The catalysed reaction is a 2-acylglycerol + an acyl-CoA = a 2,3-diacyl-sn-glycerol + CoA. It carries out the reaction a 1-acylglycerol + an acyl-CoA = a 1,2-diacylglycerol + CoA. It catalyses the reaction a 1-acylglycerol + an acyl-CoA = a 1,3-diacylglycerol + CoA. The enzyme catalyses a 1-acyl-sn-glycerol + an acyl-CoA = a 1,3-diacyl-sn-glycerol + CoA. The catalysed reaction is a 3-acyl-sn-glycerol + an acyl-CoA = a 1,3-diacyl-sn-glycerol + CoA. Its pathway is glycerolipid metabolism; triacylglycerol biosynthesis. Its function is as follows. Involved in glycerolipid synthesis and lipid metabolism. Catalyzes the formation of diacylglycerol, the precursor of triacylglycerol, by transferring the acyl chain of a fatty acyl-CoA to a monoacylglycerol, mainly at the sn-1 or sn-3 positions. It uses both sn-2-monoacylglycerol (2-acylglycerol) and sn-1-monoacylglycerol (1-acyl-sn-glycerol) equally well as substrates, and uses sn-3-monoacylglycerol (3-acyl-sn-glycerol) with lower efficiency. The chain is 2-acylglycerol O-acyltransferase 1 (mogat1) from Xenopus tropicalis (Western clawed frog).